The primary structure comprises 185 residues: MEGSSSSMQSKYKGVRKRKWGKWVSEIRLPNSRERIWLGSYDTPEKAARAFDAALYCLRGNNAKFNFPDNPPVISGGRNLSRSEIREAAARFANSAEDDSSGGAGYEIRQESASTSMDVDSEFLSMLPTVGSGNFASEFGLFPGFDDFSDEYSGDRFREQLSPTQDYYQLGEETYADGSMFLWNF.

The segment at residues 11–68 (KYKGVRKRKWGKWVSEIRLPNSRERIWLGSYDTPEKAARAFDAALYCLRGNNAKFNFP) is a DNA-binding region (AP2/ERF).

This sequence belongs to the AP2/ERF transcription factor family. ERF subfamily.

It is found in the nucleus. Functionally, probably acts as a transcriptional activator. Binds to the GCC-box pathogenesis-related promoter element. May be involved in the regulation of gene expression by stress factors and by components of stress signal transduction pathways. This is Ethylene-responsive transcription factor ERF017 (ERF017) from Arabidopsis thaliana (Mouse-ear cress).